A 250-amino-acid polypeptide reads, in one-letter code: N-acetylmuramoyl-L-alanine amidase CwlH (250 aa).

The first 44 residues, 1-44 (MVTIKKDFIPVSNDNRPGYAMAPAYITVHNTANTAKGADAKMHA), serve as a signal peptide directing secretion. The N-acetylmuramoyl-L-alanine amidase domain occupies 45–141 (KFVKNPNTSE…KKWSGKECPR (97 aa)).

The protein belongs to the N-acetylmuramoyl-L-alanine amidase 2 family.

It localises to the secreted. The enzyme catalyses Hydrolyzes the link between N-acetylmuramoyl residues and L-amino acid residues in certain cell-wall glycopeptides.. In terms of biological role, autolysins are involved in some important biological processes such as cell separation, cell-wall turnover, competence for genetic transformation, formation of the flagella and sporulation. Could play a role in mother cell lysis with CwlC. This chain is N-acetylmuramoyl-L-alanine amidase CwlH (cwlH), found in Bacillus subtilis (strain 168).